The sequence spans 644 residues: DNA gyrase subunit B (644 aa).

Residues 429 to 543 (CEIFLVEGDS…AGYVYIAQPP (115 aa)) form the Toprim domain. Mg(2+) is bound by residues glutamate 435, aspartate 508, and aspartate 510.

This sequence belongs to the type II topoisomerase GyrB family. Heterotetramer, composed of two GyrA and two GyrB chains. In the heterotetramer, GyrA contains the active site tyrosine that forms a transient covalent intermediate with DNA, while GyrB binds cofactors and catalyzes ATP hydrolysis. The cofactor is Mg(2+). Requires Mn(2+) as cofactor. Ca(2+) serves as cofactor.

It is found in the cytoplasm. It catalyses the reaction ATP-dependent breakage, passage and rejoining of double-stranded DNA.. In terms of biological role, a type II topoisomerase that negatively supercoils closed circular double-stranded (ds) DNA in an ATP-dependent manner to modulate DNA topology and maintain chromosomes in an underwound state. Negative supercoiling favors strand separation, and DNA replication, transcription, recombination and repair, all of which involve strand separation. Also able to catalyze the interconversion of other topological isomers of dsDNA rings, including catenanes and knotted rings. Type II topoisomerases break and join 2 DNA strands simultaneously in an ATP-dependent manner. This chain is DNA gyrase subunit B, found in Staphylococcus aureus (strain USA300).